A 436-amino-acid polypeptide reads, in one-letter code: 2-aminohexano-6-lactam racemase (436 aa).

Pyridoxal 5'-phosphate contacts are provided by residues 110 to 111 (GS), Tyr137, and 238 to 241 (DEVK). Tyr137 is an active-site residue. Lys267 carries the post-translational modification N6-(pyridoxal phosphate)lysine. Pyridoxal 5'-phosphate is bound at residue Thr295.

Belongs to the class-III pyridoxal-phosphate-dependent aminotransferase family. As to quaternary structure, monomer. Pyridoxal 5'-phosphate serves as cofactor.

It catalyses the reaction L-2-aminohexano-6-lactam = D-2-aminohexano-6-lactam. Catalyzes the interconversion of L-alpha-amino-epsilon-caprolactam and D-alpha-amino-epsilon-caprolactam. This Achromobacter obae protein is 2-aminohexano-6-lactam racemase.